The following is a 208-amino-acid chain: ATP synthase subunit beta, chloroplastic (208 aa).

It belongs to the ATPase alpha/beta chains family. F-type ATPases have 2 components, CF(1) - the catalytic core - and CF(0) - the membrane proton channel. CF(1) has five subunits: alpha(3), beta(3), gamma(1), delta(1), epsilon(1). CF(0) has four main subunits: a(1), b(1), b'(1) and c(9-12).

The protein resides in the plastid. The protein localises to the chloroplast thylakoid membrane. It catalyses the reaction ATP + H2O + 4 H(+)(in) = ADP + phosphate + 5 H(+)(out). Produces ATP from ADP in the presence of a proton gradient across the membrane. The catalytic sites are hosted primarily by the beta subunits. This chain is ATP synthase subunit beta, chloroplastic (atpB), found in Lonchitis hirsuta (Tomato fern).